The sequence spans 198 residues: MVHVCYYRNYGKTFKGPRRPYEKERLDSELKLVGEYGLRNKRELWRVQYSLSRIRNAARDLLTLDEKSPRRIFEGEALLRRMNRYGLLDESQNKLDYVLALTVENFLERRLQTIVFKSGMAKSIHHSRVLIRQRHIRVGKQLVNIPSFMVRLDSQKHIDFALTSPFGGGRPGRVKRRNEKSASKKASGGGDADGDDEE.

The residue at position 68 (Ser68) is a Phosphoserine. Residues 109 to 180 enclose the S4 RNA-binding domain; the sequence is RRLQTIVFKS…PGRVKRRNEK (72 aa). The tract at residues 163–198 is disordered; the sequence is TSPFGGGRPGRVKRRNEKSASKKASGGGDADGDDEE.

Belongs to the universal ribosomal protein uS4 family. As to quaternary structure, binds to the translation initiation factors TIF3E1.

The protein is Small ribosomal subunit protein uS4z (RPS9B) of Arabidopsis thaliana (Mouse-ear cress).